The sequence spans 113 residues: Large ribosomal subunit protein P1z (113 aa).

The interval 87–113 (AAAPAKEEKKDEPAEESDGDLGFGLFD) is disordered. Serine 103 is subject to Phosphoserine.

The protein belongs to the eukaryotic ribosomal protein P1/P2 family. In terms of assembly, P1 and P2 exist as dimers at the large ribosomal subunit.

In terms of biological role, plays an important role in the elongation step of protein synthesis. The chain is Large ribosomal subunit protein P1z (RPP1B) from Arabidopsis thaliana (Mouse-ear cress).